A 119-amino-acid chain; its full sequence is Large ribosomal subunit protein uL24 (119 aa).

This sequence belongs to the universal ribosomal protein uL24 family. Part of the 50S ribosomal subunit.

Functionally, one of two assembly initiator proteins, it binds directly to the 5'-end of the 23S rRNA, where it nucleates assembly of the 50S subunit. Its function is as follows. Located at the polypeptide exit tunnel on the outside of the subunit. This chain is Large ribosomal subunit protein uL24, found in Methanosarcina acetivorans (strain ATCC 35395 / DSM 2834 / JCM 12185 / C2A).